A 283-amino-acid polypeptide reads, in one-letter code: 4-diphosphocytidyl-2-C-methyl-D-erythritol kinase (283 aa).

The active site involves lysine 10. Proline 99–serine 109 is an ATP binding site. Aspartate 141 is an active-site residue.

This sequence belongs to the GHMP kinase family. IspE subfamily. Homodimer.

The catalysed reaction is 4-CDP-2-C-methyl-D-erythritol + ATP = 4-CDP-2-C-methyl-D-erythritol 2-phosphate + ADP + H(+). It functions in the pathway isoprenoid biosynthesis; isopentenyl diphosphate biosynthesis via DXP pathway; isopentenyl diphosphate from 1-deoxy-D-xylulose 5-phosphate: step 3/6. Catalyzes the phosphorylation of the position 2 hydroxy group of 4-diphosphocytidyl-2C-methyl-D-erythritol. This Salmonella paratyphi C (strain RKS4594) protein is 4-diphosphocytidyl-2-C-methyl-D-erythritol kinase.